Consider the following 420-residue polypeptide: Histidine--tRNA ligase (420 aa).

Belongs to the class-II aminoacyl-tRNA synthetase family. As to quaternary structure, homodimer.

It localises to the cytoplasm. It carries out the reaction tRNA(His) + L-histidine + ATP = L-histidyl-tRNA(His) + AMP + diphosphate + H(+). This chain is Histidine--tRNA ligase, found in Nitrosomonas europaea (strain ATCC 19718 / CIP 103999 / KCTC 2705 / NBRC 14298).